The sequence spans 73 residues: U3-agatoxin-Ao1i (73 aa).

A signal peptide spans 1-20 (MRTIISLLLLSAMVFAEIEA). Residues 21 to 34 (ISLEEGLQLFEGER) constitute a propeptide that is removed on maturation. 4 disulfide bridges follow: cysteine 36/cysteine 52, cysteine 43/cysteine 57, cysteine 51/cysteine 67, and cysteine 59/cysteine 65. Serine 71 is modified (serine amide).

The protein belongs to the neurotoxin 07 (Beta/delta-agtx) family. 03 (aga-4) subfamily. Aga sub-subfamily. Expressed by the venom gland.

It is found in the secreted. Insecticidal neurotoxin that induces an irreversible spastic paralysis when injected into insects. Modifies presynaptic voltage-gated sodium channels (Nav), causing them to open at the normal resting potential of the nerve. This leads to spontaneous release of neurotransmitter and repetitive action potentials in motor neurons. This Agelena orientalis (Funnel-web spider) protein is U3-agatoxin-Ao1i.